The sequence spans 179 residues: Acireductone dioxygenase (179 aa).

Fe(2+)-binding residues include H97, H99, E103, and H141. Ni(2+) contacts are provided by H97, H99, E103, and H141.

The protein belongs to the acireductone dioxygenase (ARD) family. In terms of assembly, monomer. Requires Fe(2+) as cofactor. The cofactor is Ni(2+).

It catalyses the reaction 1,2-dihydroxy-5-(methylsulfanyl)pent-1-en-3-one + O2 = 3-(methylsulfanyl)propanoate + CO + formate + 2 H(+). The catalysed reaction is 1,2-dihydroxy-5-(methylsulfanyl)pent-1-en-3-one + O2 = 4-methylsulfanyl-2-oxobutanoate + formate + 2 H(+). Its pathway is amino-acid biosynthesis; L-methionine biosynthesis via salvage pathway; L-methionine from S-methyl-5-thio-alpha-D-ribose 1-phosphate: step 5/6. Its function is as follows. Catalyzes 2 different reactions between oxygen and the acireductone 1,2-dihydroxy-3-keto-5-methylthiopentene (DHK-MTPene) depending upon the metal bound in the active site. Fe-containing acireductone dioxygenase (Fe-ARD) produces formate and 2-keto-4-methylthiobutyrate (KMTB), the alpha-ketoacid precursor of methionine in the methionine recycle pathway. Ni-containing acireductone dioxygenase (Ni-ARD) produces methylthiopropionate, carbon monoxide and formate, and does not lie on the methionine recycle pathway. This is Acireductone dioxygenase from Gluconacetobacter diazotrophicus (strain ATCC 49037 / DSM 5601 / CCUG 37298 / CIP 103539 / LMG 7603 / PAl5).